Consider the following 193-residue polypeptide: Ribonuclease HII (193 aa).

One can recognise an RNase H type-2 domain in the interval Cys-15 to Cys-193. A divalent metal cation contacts are provided by Asp-21, Glu-22, and Asp-112.

It belongs to the RNase HII family. Mn(2+) serves as cofactor. Mg(2+) is required as a cofactor.

Its subcellular location is the cytoplasm. It carries out the reaction Endonucleolytic cleavage to 5'-phosphomonoester.. In terms of biological role, endonuclease that specifically degrades the RNA of RNA-DNA hybrids. In Rickettsia conorii (strain ATCC VR-613 / Malish 7), this protein is Ribonuclease HII.